The chain runs to 942 residues: Lambda-carrageenase (942 aa).

Residues 1 to 25 (MKIKILSAMIASSLLIGCVIPTVKA) form the signal peptide.

As to quaternary structure, monomer.

It localises to the secreted. It carries out the reaction Endohydrolysis of (1-&gt;4)-beta-linkages in the backbone of lambda-carrageenan, resulting in the tetrasaccharide alpha-D-Galp2,6S2-(1-&gt;3)-beta-D-Galp2S-(1-&gt;4)-alpha-D-Galp2,6S2-(1-&gt;3)-D-Galp2S.. In terms of biological role, hydrolyzes lambda-carrageenan with inversion of anomeric configuration. Does not hydrolyze iota- and kappa-carrageenans, agarose or porphyran. This chain is Lambda-carrageenase, found in Pseudoalteromonas sp.